Here is a 59-residue protein sequence, read N- to C-terminus: Potassium channel toxin alpha-KTx 3.5 (59 aa).

The N-terminal stretch at 1-22 is a signal peptide; it reads MKVFSAVLIILFVCSMIIGINA. Disulfide bonds link C29–C49, C35–C54, and C39–C56. The tract at residues 47-54 is interaction with Ca(2+)-activated K(+) channels; that stretch reads GKCMNGKC.

Belongs to the short scorpion toxin superfamily. Potassium channel inhibitor family. Alpha-KTx 03 subfamily. As to expression, expressed by the venom gland.

It is found in the secreted. Functionally, has also been shown to inhibit with high potency Kv1.3/KCNA3 and with low potency Kv1.1/KCNA1 and Kv1.2/KCNA2 voltage-gated potassium channels. Also binds and inhibits the molluscan calcium-activated potassium channels KCa (Kd=135 nM). The polypeptide is Potassium channel toxin alpha-KTx 3.5 (KTX2) (Androctonus australis (Sahara scorpion)).